A 216-amino-acid chain; its full sequence is Protein Syd (216 aa).

This sequence belongs to the Syd family.

Its subcellular location is the cell inner membrane. Its function is as follows. Interacts with the SecY protein in vivo. May bind preferentially to an uncomplexed state of SecY, thus functioning either as a chelating agent for excess SecY in the cell or as a regulatory factor that negatively controls the translocase function. This chain is Protein Syd, found in Shewanella frigidimarina (strain NCIMB 400).